A 452-amino-acid chain; its full sequence is Fructose-2,6-bisphosphatase (452 aa).

The interval Met1–Lys223 is 6-phosphofructo-2-kinase. Residue Gly20–Phe28 coordinates ATP. Arg53 and Arg78 together coordinate beta-D-fructose 6-phosphate. Residue Asp104 is part of the active site. Beta-D-fructose 6-phosphate contacts are provided by Thr106 and Arg112. Asn143–Gly148 contributes to the ATP binding site. Residues Arg169 and Tyr173 each contribute to the beta-D-fructose 6-phosphate site. Residues Pro224–Phe452 are fructose-2,6-bisphosphatase. Arg231 provides a ligand contact to beta-D-fructose 2,6-bisphosphate. Catalysis depends on His232, which acts as the Tele-phosphohistidine intermediate. Beta-D-fructose 2,6-bisphosphate-binding residues include Asn238 and Gly244. Glu302 functions as the Proton donor/acceptor in the catalytic mechanism. Beta-D-fructose 2,6-bisphosphate contacts are provided by Tyr313, Arg327, Lys331, Tyr342, Gln368, and Arg372. Phe324–Arg327 serves as a coordination point for ATP. Residues Gln368 to Arg372 and Tyr404 contribute to the ATP site. Phosphoserine is present on residues Ser435 and Ser446.

It in the C-terminal section; belongs to the phosphoglycerate mutase family.

It catalyses the reaction beta-D-fructose 2,6-bisphosphate + H2O = beta-D-fructose 6-phosphate + phosphate. With respect to regulation, inhibited by fructose 6-P, activated by glycerol 3-P. Functionally, monofunctional, high-specificity fructose-2,6-bisphosphatase, which releases phosphate from the 2-position of fructose 2,6-bisphosphate. Has no detectable 6-phosphofructo-2-kinase activity. In Saccharomyces cerevisiae (strain ATCC 204508 / S288c) (Baker's yeast), this protein is Fructose-2,6-bisphosphatase.